The sequence spans 85 residues: Large ribosomal subunit protein bL27 (85 aa).

A disordered region spans residues 1-20; the sequence is MATKKAGGSTRNGRDSEAKR.

Belongs to the bacterial ribosomal protein bL27 family.

This is Large ribosomal subunit protein bL27 from Glaesserella parasuis serovar 5 (strain SH0165) (Haemophilus parasuis).